The following is a 122-amino-acid chain: NADPH-dependent 7-cyano-7-deazaguanine reductase (122 aa).

Residue C34 is the Thioimide intermediate of the active site. D41 serves as the catalytic Proton donor. Residues V56 to L58 and H75 to E76 each bind substrate.

It belongs to the GTP cyclohydrolase I family. QueF type 1 subfamily.

It is found in the cytoplasm. It catalyses the reaction 7-aminomethyl-7-carbaguanine + 2 NADP(+) = 7-cyano-7-deazaguanine + 2 NADPH + 3 H(+). It functions in the pathway tRNA modification; tRNA-queuosine biosynthesis. Catalyzes the NADPH-dependent reduction of 7-cyano-7-deazaguanine (preQ0) to 7-aminomethyl-7-deazaguanine (preQ1). The polypeptide is NADPH-dependent 7-cyano-7-deazaguanine reductase (Anaeromyxobacter dehalogenans (strain 2CP-C)).